Reading from the N-terminus, the 783-residue chain is Flavin carrier protein 2 (783 aa).

The N-terminal stretch at 1–22 is a signal peptide; sequence MIFLNTFARCLLTCFVLCSGTA. Residues 23–182 are Lumenal-facing; the sequence is RSSDTNDTTP…NGKTVQTKYA (160 aa). N-linked (GlcNAc...) asparagine glycans are attached at residues Asn-28, Asn-65, Asn-81, and Asn-156. Residues 183-203 traverse the membrane as a helical segment; it reads AWPIAAISGVGVLTSGFVSVI. At 204 to 211 the chain is on the cytoplasmic side; sequence GYSATAAH. The chain crosses the membrane as a helical span at residues 212 to 232; it reads IASNSISLFIYFQNLAITAMM. At 233–347 the chain is on the lumenal side; sequence GVSRVPPIAA…AYLANIELSN (115 aa). Asn-323 is a glycosylation site (N-linked (GlcNAc...) asparagine). The helical transmembrane segment at 348-368 threads the bilayer; the sequence is FFLTGIVFFLFFLFVVVVSLI. The Cytoplasmic portion of the chain corresponds to 369-402; it reads FFKALLEVLTRARILKETSNFFQYRKNWGSIIKG. The helical transmembrane segment at 403–423 threads the bilayer; the sequence is TLFRLSIIAFPQVSLLAIWEF. The Lumenal portion of the chain corresponds to 424-430; the sequence is TQVNSPA. The chain crosses the membrane as a helical span at residues 431–451; it reads IVVDAVVILLIITGLLVYGTI. The Cytoplasmic portion of the chain corresponds to 452-492; sequence RVFIKGRESLRLYKNPAYLLYSDTYFLNKFGFLYVQFKADK. A helical transmembrane segment spans residues 493-513; it reads FWWLLPLLSYAFLRSLFVAVL. The Lumenal segment spans residues 514–521; that stretch reads QNQGKAQA. The chain crosses the membrane as a helical span at residues 522–542; the sequence is MIIFVIELAYFVCLCWIRPYL. The Cytoplasmic portion of the chain corresponds to 543-547; the sequence is DKRTN. Residues 548-568 form a helical membrane-spanning segment; the sequence is VFNIAIHLVNLINAFFFLFFS. Residues 569–581 are Lumenal-facing; it reads NLFKQPAVVSSVM. The helical transmembrane segment at 582–602 threads the bilayer; it reads AVILFVLNAVFALFLLLFTIV. Topologically, residues 603–783 are cytoplasmic; the sequence is TCTLALLHRN…ENARNNNPYL (181 aa). The tract at residues 681–783 is disordered; it reads RLFDDETSSS…ENARNNNPYL (103 aa). The span at 688–697 shows a compositional bias: low complexity; the sequence is SSSSFKQNSS. 2 stretches are compositionally biased toward polar residues: residues 704-748 and 756-767; these read VTEQ…TSSL and YLGNSNKSYSHF. Residues 768-783 are compositionally biased toward low complexity; that stretch reads NNNGSNENARNNNPYL.

Belongs to the transient receptor potential (TRP) ion channel family.

The protein resides in the endoplasmic reticulum membrane. Functionally, may be responsible for the transport of FAD into the endoplasmic reticulum lumen, where it is required for oxidative protein folding. The chain is Flavin carrier protein 2 (FLC2) from Saccharomyces cerevisiae (strain ATCC 204508 / S288c) (Baker's yeast).